The sequence spans 125 residues: Glycine cleavage system H protein (125 aa).

The Lipoyl-binding domain occupies 22 to 104 (SYIIGITDFA…YDTGWILKLT (83 aa)). Lys-63 carries the N6-lipoyllysine modification.

This sequence belongs to the GcvH family. In terms of assembly, the glycine cleavage system is composed of four proteins: P, T, L and H. (R)-lipoate is required as a cofactor.

In terms of biological role, the glycine cleavage system catalyzes the degradation of glycine. The H protein shuttles the methylamine group of glycine from the P protein to the T protein. Is also involved in protein lipoylation via its role as an octanoyl/lipoyl carrier protein intermediate. In Listeria innocua serovar 6a (strain ATCC BAA-680 / CLIP 11262), this protein is Glycine cleavage system H protein.